The primary structure comprises 649 residues: Echinoderm microtubule-associated protein-like 2 (649 aa).

The interval 10–649 (KEVIFSMEEG…DTSVLQWRVA (640 aa)) is tandem atypical propeller in EMLs. 12 WD repeats span residues 56 to 93 (KLDWVYGYRGRDCRANLYLLPTGEVVYFVASVAVLYSV), 97 to 144 (RQRH…VWDS), 151 to 192 (HVLG…VWDW), 195 to 234 (ESKVVDSKCSNEAVLVATFHPTDPSLLITCGKSHIYFWSL), 241 to 280 (KRQGLFEKHEKPKYVLCVTFLEGGDVVTGDSGGNLYVWGK), 285 to 323 (ITQEVQGAHDGGVFALCALRDGTLVSGGGRDRRVVLWGS), 369 to 406 (FSLLVQGHVEELWGLATHPSRAQFVTCGQDKLVHLWSS), 410 to 447 (QPVWSRSIEDPARSAGFHPSGSVLAVGTVTGRWLLLDT), 452 to 489 (LVAIHTDGNEQISVVSFSPDGAYLAVGSHDNLVYVYTV), 495 to 535 (KVSR…YWDP), 564 to 602 (FGIWPEGADGTDINAVARSHDGKLLVSADDFGKVHLFSY), and 609 to 648 (ALSHKYGGHSSHVTNVAFLWDDSMALTTGGKDTSVLQWRV). A coiled-coil region spans residues 65-106 (GRDCRANLYLLPTGEVVYFVASVAVLYSVEEQRQRHYLGHND).

This sequence belongs to the WD repeat EMAP family. Interacts with GRID2 and may also interact with GRID1. Interacts with EML3. Binds unpolymerized tubulins via its WD repeat region.

It localises to the cytoplasm. It is found in the cytoskeleton. Its subcellular location is the spindle. In terms of biological role, tubulin binding protein that inhibits microtubule nucleation and growth, resulting in shorter microtubules. The chain is Echinoderm microtubule-associated protein-like 2 (Eml2) from Mus musculus (Mouse).